Here is a 266-residue protein sequence, read N- to C-terminus: MPRFRMTVEYDGTPYYGWQRQENGPSVQGALEAAVRSLTGESVSIRGAGRTDSGVHAVGQVAHIDLSRDWEPYKLRNALNAHLAMAGEAVAVLDAAAVTEDFDARFSALRRHYLYRIICRKSRLALEHKRAWWVSKDLDHERMHEAAQMLVGRHDFTTFRSVHCQANSPVRTLDRLDVTRNGDLIEIRATAQSFLHNQIRSFAGTLKLAGEGGMTPDDVRAALEARDRKACGPVAPPDGLYFMQVDYPDVIPPRRRPEIEMTEDAD.

The Nucleophile role is filled by Asp52. Tyr113 contributes to the substrate binding site.

This sequence belongs to the tRNA pseudouridine synthase TruA family. Homodimer.

It catalyses the reaction uridine(38/39/40) in tRNA = pseudouridine(38/39/40) in tRNA. Formation of pseudouridine at positions 38, 39 and 40 in the anticodon stem and loop of transfer RNAs. The sequence is that of tRNA pseudouridine synthase A from Agrobacterium fabrum (strain C58 / ATCC 33970) (Agrobacterium tumefaciens (strain C58)).